Reading from the N-terminus, the 657-residue chain is L-glutamate oxidase precursor (657 aa).

The first 12 residues, 1–12 (MTETPRDNSATR), serve as a signal peptide directing secretion. The FAD site is built by Glu86, Ala87, Arg95, Met120, Arg121, Met350, Glu639, Trp647, and Ile648.

Belongs to the flavin monoamine oxidase family. LGOX subfamily. The mature enzyme is a heterohexamer composed of 2 alpha chains, 2 beta chains and 2 gamma chains (alpha2beta2gamma2). The cofactor is FAD. The precursor form is proteolytically cleaved by an endopeptidase into alpha, beta and gamma chains, which form the stable mature enzyme.

The protein resides in the secreted. The catalysed reaction is L-glutamate + O2 + H2O = H2O2 + 2-oxoglutarate + NH4(+). Proteinase K-treated enzyme exhibits improved affinity for the substrate, increased activity and increased thermostability. Functionally, catalyzes the oxidative deamination of L-glutamate to 2-ketoglutarate along with the production of ammonia and hydrogen peroxide. Exhibits strict specificity for L-glutamate, and shows only very weak activity with L-glutamine. The polypeptide is L-glutamate oxidase precursor (Streptomyces diastatochromogenes).